The chain runs to 130 residues: Small ribosomal subunit protein uS9 (130 aa).

This sequence belongs to the universal ribosomal protein uS9 family.

This chain is Small ribosomal subunit protein uS9, found in Paracidovorax citrulli (strain AAC00-1) (Acidovorax citrulli).